Consider the following 453-residue polypeptide: Ribulose bisphosphate carboxylase large chain (453 aa).

Positions 1-2 (MS) are excised as a propeptide. P3 bears the N-acetylproline mark. K14 is subject to N6,N6,N6-trimethyllysine. Positions 123 and 173 each coordinate substrate. The Proton acceptor role is filled by K175. K177 provides a ligand contact to substrate. 3 residues coordinate Mg(2+): K201, D203, and E204. K201 bears the N6-carboxylysine mark. Residue H294 is the Proton acceptor of the active site. R295, H327, and S379 together coordinate substrate.

It belongs to the RuBisCO large chain family. Type I subfamily. As to quaternary structure, heterohexadecamer of 8 large chains and 8 small chains; disulfide-linked. The disulfide link is formed within the large subunit homodimers. Mg(2+) is required as a cofactor. In terms of processing, the disulfide bond which can form in the large chain dimeric partners within the hexadecamer appears to be associated with oxidative stress and protein turnover.

The protein localises to the plastid. It is found in the chloroplast. It catalyses the reaction 2 (2R)-3-phosphoglycerate + 2 H(+) = D-ribulose 1,5-bisphosphate + CO2 + H2O. It carries out the reaction D-ribulose 1,5-bisphosphate + O2 = 2-phosphoglycolate + (2R)-3-phosphoglycerate + 2 H(+). RuBisCO catalyzes two reactions: the carboxylation of D-ribulose 1,5-bisphosphate, the primary event in carbon dioxide fixation, as well as the oxidative fragmentation of the pentose substrate in the photorespiration process. Both reactions occur simultaneously and in competition at the same active site. This chain is Ribulose bisphosphate carboxylase large chain, found in Galium palustre (Common marsh bedstraw).